The sequence spans 210 residues: Probable nicotinate-nucleotide adenylyltransferase (210 aa).

The protein belongs to the NadD family.

The enzyme catalyses nicotinate beta-D-ribonucleotide + ATP + H(+) = deamido-NAD(+) + diphosphate. The protein operates within cofactor biosynthesis; NAD(+) biosynthesis; deamido-NAD(+) from nicotinate D-ribonucleotide: step 1/1. Catalyzes the reversible adenylation of nicotinate mononucleotide (NaMN) to nicotinic acid adenine dinucleotide (NaAD). The sequence is that of Probable nicotinate-nucleotide adenylyltransferase from Vesicomyosocius okutanii subsp. Calyptogena okutanii (strain HA).